A 208-amino-acid chain; its full sequence is Small ribosomal subunit protein uS4 (208 aa).

Residues 30-49 (KSALEKRPYPPGQHGQRRSK) form a disordered region. One can recognise an S4 RNA-binding domain in the interval 98 to 161 (RRLDNVVYRM…KNNPQIQRSL (64 aa)).

This sequence belongs to the universal ribosomal protein uS4 family. Part of the 30S ribosomal subunit. Contacts protein S5. The interaction surface between S4 and S5 is involved in control of translational fidelity.

In terms of biological role, one of the primary rRNA binding proteins, it binds directly to 16S rRNA where it nucleates assembly of the body of the 30S subunit. Its function is as follows. With S5 and S12 plays an important role in translational accuracy. The sequence is that of Small ribosomal subunit protein uS4 from Nitratiruptor sp. (strain SB155-2).